The chain runs to 240 residues: UDP-2,3-diacylglucosamine hydrolase (240 aa).

Residues Asp7, His9, Asp40, Asn78, and His113 each contribute to the Mn(2+) site. 78–79 lines the substrate pocket; the sequence is NR. Positions 121, 159, 163, 166, and 194 each coordinate substrate. Mn(2+)-binding residues include His194 and His196.

Belongs to the LpxH family. Mn(2+) serves as cofactor.

It is found in the cell inner membrane. It carries out the reaction UDP-2-N,3-O-bis[(3R)-3-hydroxytetradecanoyl]-alpha-D-glucosamine + H2O = 2-N,3-O-bis[(3R)-3-hydroxytetradecanoyl]-alpha-D-glucosaminyl 1-phosphate + UMP + 2 H(+). It participates in glycolipid biosynthesis; lipid IV(A) biosynthesis; lipid IV(A) from (3R)-3-hydroxytetradecanoyl-[acyl-carrier-protein] and UDP-N-acetyl-alpha-D-glucosamine: step 4/6. Its function is as follows. Hydrolyzes the pyrophosphate bond of UDP-2,3-diacylglucosamine to yield 2,3-diacylglucosamine 1-phosphate (lipid X) and UMP by catalyzing the attack of water at the alpha-P atom. Involved in the biosynthesis of lipid A, a phosphorylated glycolipid that anchors the lipopolysaccharide to the outer membrane of the cell. The protein is UDP-2,3-diacylglucosamine hydrolase of Pseudomonas entomophila (strain L48).